The following is a 582-amino-acid chain: Potassium-transporting ATPase potassium-binding subunit (582 aa).

Helical transmembrane passes span 6–26, 65–85, 87–107, 136–156, 178–198, 277–297, 304–324, 402–422, 441–461, 505–525, and 546–566; these read LVQL…LGLY, IYAL…YVLE, LQGG…FVAV, GLAV…VALI, VLYI…WQGV, LEML…GVMI, LAIL…TLAA, GLYG…LMVG, ALVI…AAVI, IAGA…VLAL, and GGIF…LTFV.

The protein belongs to the KdpA family. The system is composed of three essential subunits: KdpA, KdpB and KdpC.

The protein resides in the cell inner membrane. In terms of biological role, part of the high-affinity ATP-driven potassium transport (or Kdp) system, which catalyzes the hydrolysis of ATP coupled with the electrogenic transport of potassium into the cytoplasm. This subunit binds the periplasmic potassium ions and delivers the ions to the membrane domain of KdpB through an intramembrane tunnel. This chain is Potassium-transporting ATPase potassium-binding subunit, found in Solidesulfovibrio magneticus (strain ATCC 700980 / DSM 13731 / RS-1) (Desulfovibrio magneticus).